A 540-amino-acid chain; its full sequence is Dynein axonemal assembly factor 3 homolog (540 aa).

Residues 480–499 (AVTEAMPESTFKYDTDTDYG) form a disordered region.

It belongs to the DNAAF3 family. Expressed in mechanosensory chordotonal (Ch) neurons, spermatocytes and spermatids (at protein level).

Its subcellular location is the cytoplasm. It is found in the dynein axonemal particle. In terms of biological role, required for the assembly of axonemal inner and outer dynein arms. Involved in the cytoplasmic preassembly of dyneins into complexes before their transport into cilia. Essential for the development of axonemal dynein motors in the sensory cilium of mechanosensory chordotonal (Ch) neurons and sperm flagellum, and consequently, is required for the mechanotransduction process of hearing and sperm mobility. This chain is Dynein axonemal assembly factor 3 homolog, found in Drosophila melanogaster (Fruit fly).